The sequence spans 169 residues: S-ribosylhomocysteine lyase (169 aa).

Positions 54, 58, and 128 each coordinate Fe cation.

Belongs to the LuxS family. In terms of assembly, homodimer. Fe cation serves as cofactor.

The enzyme catalyses S-(5-deoxy-D-ribos-5-yl)-L-homocysteine = (S)-4,5-dihydroxypentane-2,3-dione + L-homocysteine. In terms of biological role, involved in the synthesis of autoinducer 2 (AI-2) which is secreted by bacteria and is used to communicate both the cell density and the metabolic potential of the environment. The regulation of gene expression in response to changes in cell density is called quorum sensing. Catalyzes the transformation of S-ribosylhomocysteine (RHC) to homocysteine (HC) and 4,5-dihydroxy-2,3-pentadione (DPD). The chain is S-ribosylhomocysteine lyase from Shewanella putrefaciens (strain CN-32 / ATCC BAA-453).